The sequence spans 148 residues: Large ribosomal subunit protein bL27m (148 aa).

The transit peptide at 1–30 (MALAVLAWRTRTAVIALLSPPQAAALAVRY) directs the protein to the mitochondrion.

The protein belongs to the bacterial ribosomal protein bL27 family. As to quaternary structure, component of the mitochondrial ribosome large subunit (39S) which comprises a 16S rRNA and about 50 distinct proteins.

It localises to the mitochondrion. The polypeptide is Large ribosomal subunit protein bL27m (MRPL27) (Bos taurus (Bovine)).